A 206-amino-acid chain; its full sequence is LOB domain-containing protein 35 (206 aa).

An LOB domain is found at 4-105 (TCCSACKVMK…EQINSAKNEL (102 aa)). The disordered stretch occupies residues 184-206 (ASTSGGTSATQKTLPFPQNHNQP).

It belongs to the LOB domain-containing protein family.

This chain is LOB domain-containing protein 35 (LBD35), found in Arabidopsis thaliana (Mouse-ear cress).